The sequence spans 186 residues: Transcriptional repressor NrdR (186 aa).

Residues 3–34 (CPFCRHPDSRVVDSREAEEGAAIRRRRSCPAC) fold into a zinc finger. Residues 46-136 (LRVRKRSGAT…VYLAFESLGD (91 aa)) form the ATP-cone domain. The segment at 149–169 (AGGGEPPVAGKPTTMPAATGA) is disordered.

Belongs to the NrdR family. Requires Zn(2+) as cofactor.

In terms of biological role, negatively regulates transcription of bacterial ribonucleotide reductase nrd genes and operons by binding to NrdR-boxes. The protein is Transcriptional repressor NrdR of Parafrankia sp. (strain EAN1pec).